Reading from the N-terminus, the 693-residue chain is Methionine--tRNA ligase (693 aa).

Positions 12-22 (PYANGPLHLGH) match the 'HIGH' region motif. Residues Cys143, Cys146, Cys156, and Cys159 each contribute to the Zn(2+) site. The 'KMSKS' region signature appears at 330-334 (KMSKS). Position 333 (Lys333) interacts with ATP. The tract at residues 557-576 (APTAKNEAAKPAAPAAAKTE) is disordered. The tRNA-binding domain occupies 590 to 693 (DFAKLDLRIG…SGAQPGMPVR (104 aa)).

It belongs to the class-I aminoacyl-tRNA synthetase family. MetG type 1 subfamily. In terms of assembly, homodimer. Requires Zn(2+) as cofactor.

The protein resides in the cytoplasm. The catalysed reaction is tRNA(Met) + L-methionine + ATP = L-methionyl-tRNA(Met) + AMP + diphosphate. In terms of biological role, is required not only for elongation of protein synthesis but also for the initiation of all mRNA translation through initiator tRNA(fMet) aminoacylation. The sequence is that of Methionine--tRNA ligase from Stenotrophomonas maltophilia (strain R551-3).